The primary structure comprises 438 residues: Aminopeptidase E (438 aa).

Residues C70, H362, and N383 contribute to the active site.

It belongs to the peptidase C1 family.

It localises to the cytoplasm. Can hydrolyze internal peptide bonds in Met-enkephalin and bradykinin; however, hydrolysis of alpha-, beta-, and kappa-caseins is not detected. The protein is Aminopeptidase E (pepE) of Lactobacillus helveticus (Lactobacillus suntoryeus).